A 354-amino-acid polypeptide reads, in one-letter code: mRNA cap guanine-N(7) methyltransferase 2 (354 aa).

An mRNA cap 0 methyltransferase domain is found at lysine 8–proline 286. S-adenosyl-L-methionine contacts are provided by residues lysine 21, aspartate 61, and aspartate 88–proline 89.

This sequence belongs to the class I-like SAM-binding methyltransferase superfamily. mRNA cap 0 methyltransferase family.

Its subcellular location is the nucleus. The catalysed reaction is a 5'-end (5'-triphosphoguanosine)-ribonucleoside in mRNA + S-adenosyl-L-methionine = a 5'-end (N(7)-methyl 5'-triphosphoguanosine)-ribonucleoside in mRNA + S-adenosyl-L-homocysteine. In terms of biological role, mRNA capping methyltransferase that methylates the N7 position of the added guanosine to the 5'-cap structure of mRNAs. Binds RNA containing 5'-terminal GpppC. This chain is mRNA cap guanine-N(7) methyltransferase 2, found in Arabidopsis thaliana (Mouse-ear cress).